The primary structure comprises 81 residues: Cytochrome b559 subunit alpha (81 aa).

Residues 21-35 traverse the membrane as a helical segment; that stretch reads VIHSVTIPSLFVGGW. Position 23 (H23) interacts with heme.

It belongs to the PsbE/PsbF family. Heterodimer of an alpha subunit and a beta subunit. PSII is composed of 1 copy each of membrane proteins PsbA, PsbB, PsbC, PsbD, PsbE, PsbF, PsbH, PsbI, PsbJ, PsbK, PsbL, PsbM, PsbT, PsbY, PsbZ, Psb30/Ycf12, at least 3 peripheral proteins of the oxygen-evolving complex and a large number of cofactors. It forms dimeric complexes. It depends on heme b as a cofactor.

Its subcellular location is the plastid. The protein localises to the chloroplast thylakoid membrane. Its function is as follows. This b-type cytochrome is tightly associated with the reaction center of photosystem II (PSII). PSII is a light-driven water:plastoquinone oxidoreductase that uses light energy to abstract electrons from H(2)O, generating O(2) and a proton gradient subsequently used for ATP formation. It consists of a core antenna complex that captures photons, and an electron transfer chain that converts photonic excitation into a charge separation. The polypeptide is Cytochrome b559 subunit alpha (Euglena gracilis).